The sequence spans 181 residues: dCTP deaminase (181 aa).

DCTP is bound by residues 100–105 (RSTFAR) and Asp-116. Glu-126 functions as the Proton donor/acceptor in the catalytic mechanism. The dCTP site is built by Tyr-158 and Gln-165. Residues 160–181 (GKYQGQRGVTPPKLDNSSSKNF) form a disordered region.

Belongs to the dCTP deaminase family. As to quaternary structure, homotrimer.

The catalysed reaction is dCTP + H2O + H(+) = dUTP + NH4(+). The protein operates within pyrimidine metabolism; dUMP biosynthesis; dUMP from dCTP (dUTP route): step 1/2. Functionally, catalyzes the deamination of dCTP to dUTP. The polypeptide is dCTP deaminase (Desulfurococcus amylolyticus (strain DSM 18924 / JCM 16383 / VKM B-2413 / 1221n) (Desulfurococcus kamchatkensis)).